The primary structure comprises 335 residues: Phosphate acyltransferase (335 aa).

This sequence belongs to the PlsX family. Homodimer. Probably interacts with PlsY.

The protein resides in the cytoplasm. The enzyme catalyses a fatty acyl-[ACP] + phosphate = an acyl phosphate + holo-[ACP]. It functions in the pathway lipid metabolism; phospholipid metabolism. Its function is as follows. Catalyzes the reversible formation of acyl-phosphate (acyl-PO(4)) from acyl-[acyl-carrier-protein] (acyl-ACP). This enzyme utilizes acyl-ACP as fatty acyl donor, but not acyl-CoA. This Desulfitobacterium hafniense (strain Y51) protein is Phosphate acyltransferase.